A 274-amino-acid polypeptide reads, in one-letter code: Thiazole synthase (274 aa).

K111 acts as the Schiff-base intermediate with DXP in catalysis. Residues G172, 198-199, and 220-221 each bind 1-deoxy-D-xylulose 5-phosphate; these read AG and NT.

This sequence belongs to the ThiG family. Homotetramer. Forms heterodimers with either ThiH or ThiS.

The protein localises to the cytoplasm. It catalyses the reaction [ThiS sulfur-carrier protein]-C-terminal-Gly-aminoethanethioate + 2-iminoacetate + 1-deoxy-D-xylulose 5-phosphate = [ThiS sulfur-carrier protein]-C-terminal Gly-Gly + 2-[(2R,5Z)-2-carboxy-4-methylthiazol-5(2H)-ylidene]ethyl phosphate + 2 H2O + H(+). It functions in the pathway cofactor biosynthesis; thiamine diphosphate biosynthesis. Catalyzes the rearrangement of 1-deoxy-D-xylulose 5-phosphate (DXP) to produce the thiazole phosphate moiety of thiamine. Sulfur is provided by the thiocarboxylate moiety of the carrier protein ThiS. In vitro, sulfur can be provided by H(2)S. This Gloeobacter violaceus (strain ATCC 29082 / PCC 7421) protein is Thiazole synthase.